The chain runs to 395 residues: Flap endonuclease 1 (395 aa).

The tract at residues 1–108 is N-domain; that stretch reads MGILGLSKLL…DELEMRRQKA (108 aa). Aspartate 34 provides a ligand contact to Mg(2+). Position 74 (arginine 74) interacts with DNA. Aspartate 90 contributes to the Mg(2+) binding site. Residues 116-136 form a disordered region; it reads EKAKDAGDDEMMEKMSKRTVR. The interval 126–257 is I-domain; that stretch reads MMEKMSKRTV…QKAWEGIQRY (132 aa). Residues glutamate 162, glutamate 164, aspartate 183, and aspartate 185 each coordinate Mg(2+). Glutamate 162 contacts DNA. 2 residues coordinate DNA: glycine 235 and aspartate 237. Residue aspartate 237 participates in Mg(2+) binding. The tract at residues 340-348 is interaction with PCNA; it reads TQGRLDSFF.

Belongs to the XPG/RAD2 endonuclease family. FEN1 subfamily. Interacts with PCNA. Three molecules of FEN1 bind to one PCNA trimer with each molecule binding to one PCNA monomer. PCNA stimulates the nuclease activity without altering cleavage specificity. Mg(2+) is required as a cofactor. Post-translationally, phosphorylated. Phosphorylation upon DNA damage induces relocalization to the nuclear plasma.

It is found in the nucleus. The protein resides in the nucleolus. It localises to the nucleoplasm. The protein localises to the mitochondrion. In terms of biological role, structure-specific nuclease with 5'-flap endonuclease and 5'-3' exonuclease activities involved in DNA replication and repair. During DNA replication, cleaves the 5'-overhanging flap structure that is generated by displacement synthesis when DNA polymerase encounters the 5'-end of a downstream Okazaki fragment. It enters the flap from the 5'-end and then tracks to cleave the flap base, leaving a nick for ligation. Also involved in the long patch base excision repair (LP-BER) pathway, by cleaving within the apurinic/apyrimidinic (AP) site-terminated flap. Acts as a genome stabilization factor that prevents flaps from equilibrating into structures that lead to duplications and deletions. Also possesses 5'-3' exonuclease activity on nicked or gapped double-stranded DNA, and exhibits RNase H activity. Also involved in replication and repair of rDNA and in repairing mitochondrial DNA. This is Flap endonuclease 1 from Leishmania major.